We begin with the raw amino-acid sequence, 157 residues long: S-ribosylhomocysteine lyase (157 aa).

Fe cation is bound by residues histidine 54, histidine 58, and cysteine 126.

Belongs to the LuxS family. As to quaternary structure, homodimer. Fe cation is required as a cofactor.

It carries out the reaction S-(5-deoxy-D-ribos-5-yl)-L-homocysteine = (S)-4,5-dihydroxypentane-2,3-dione + L-homocysteine. Its function is as follows. Involved in the synthesis of autoinducer 2 (AI-2) which is secreted by bacteria and is used to communicate both the cell density and the metabolic potential of the environment. The regulation of gene expression in response to changes in cell density is called quorum sensing. Catalyzes the transformation of S-ribosylhomocysteine (RHC) to homocysteine (HC) and 4,5-dihydroxy-2,3-pentadione (DPD). The protein is S-ribosylhomocysteine lyase of Bacillus pumilus (strain SAFR-032).